A 622-amino-acid polypeptide reads, in one-letter code: MAILSTVPALLFALASWAPTVAAQSAADYFVHELPGAPKEPFIKMHAGHVEVTPEHNGNIFFWHFQNQHIANKQRTVIWLNGGPGCSSEDGALMEIGPYRVKDPDHLEYNNGSWNEFANLLFVDNPVGTGFSFVDTNSYLHELPEMADQFVQFLEKWFAMFPEYEHDDLYISGESYAGQHIPYIAKHILERNKKPGVKTPWQLKGLLMGNAWISPKEQYDAYLKYAYEKKLIEKGSPIALQLEQQWRICRTSLAVTNTVDFTECESVLQKLLEQTAKVNAKGERECINMYDIRLRDTFPSCGMNWPPDLVNLTPYLRKAEVVSALHIKPQKTTGWTECNGAVGSAFRAPNSVPSRDYLPDLLKEVPIVLFSGAEDLICNYMGTEAMIGDMEWNGGKGFELTPGNWAPRRDWTVEGQPAGFWQEARNLTYILFYNSSHMVPFDYARRSRDMLDRFMNVDISSVGGTPTDSRLDGEQGPATSVGDIGKNGTSADAETQKKLDEAKWKAYYRSGEIVLVIVIIAAGAWGWYVWRERRKRRGYSGIMGNTPPIAQRGTTRGLEGFRDRRTGRDVETGDFDESELDDLHVTTPTVEMDKDRYSVGGDSDDEPHDEKPSRSNGGRSGR.

Positions 1–23 (MAILSTVPALLFALASWAPTVAA) are cleaved as a signal peptide. Over 24–509 (QSAADYFVHE…DEAKWKAYYR (486 aa)) the chain is Lumenal. Asparagine 111 carries N-linked (GlcNAc...) asparagine glycosylation. Residues serine 175 and aspartate 375 contribute to the active site. 2 N-linked (GlcNAc...) asparagine glycosylation sites follow: asparagine 426 and asparagine 434. Residue histidine 437 is part of the active site. The tract at residues 465-492 (TPTDSRLDGEQGPATSVGDIGKNGTSAD) is disordered. Asparagine 487 is a glycosylation site (N-linked (GlcNAc...) asparagine). A helical transmembrane segment spans residues 510–530 (SGEIVLVIVIIAAGAWGWYVW). The Cytoplasmic portion of the chain corresponds to 531 to 622 (RERRKRRGYS…SRSNGGRSGR (92 aa)). The tract at residues 539-622 (YSGIMGNTPP…SRSNGGRSGR (84 aa)) is disordered. Basic and acidic residues predominate over residues 559 to 571 (EGFRDRRTGRDVE).

This sequence belongs to the peptidase S10 family.

Its subcellular location is the golgi apparatus. It is found in the trans-Golgi network membrane. It carries out the reaction Preferential release of a C-terminal arginine or lysine residue.. Protease with a carboxypeptidase B-like function involved in the C-terminal processing of the lysine and arginine residues from protein precursors. Promotes cell fusion and is involved in the programmed cell death. The chain is Pheromone-processing carboxypeptidase KEX1 (KEX1) from Colletotrichum graminicola (strain M1.001 / M2 / FGSC 10212) (Maize anthracnose fungus).